The following is a 593-amino-acid chain: ETS-related transcription factor Elf-2 (593 aa).

At Ser-107 the chain carries Phosphoserine. The tract at residues 146-201 is disordered; it reads VEVSTEESEPMDTSPIPTSPDSHEPMKKKKVGRKPKTQQSPISNGSPELGIKKKPR. The segment covering 171–181 has biased composition (basic residues); that stretch reads MKKKKVGRKPK. Phosphothreonine is present on Thr-182. Positions 182 to 191 are enriched in polar residues; that stretch reads TQQSPISNGS. Phosphoserine is present on residues Ser-185 and Ser-191. Positions 208–290 form a DNA-binding region, ETS; that stretch reads TYLWEFLLDL…EGQRLVYQFK (83 aa). Ser-363 and Ser-372 each carry phosphoserine. Thr-376 is modified (phosphothreonine). At Ser-430 the chain carries Phosphoserine. Omega-N-methylarginine is present on Arg-494. Thr-521 is modified (phosphothreonine). A Glycyl lysine isopeptide (Lys-Gly) (interchain with G-Cter in SUMO2) cross-link involves residue Lys-536.

It belongs to the ETS family. In terms of assembly, interacts with the LIM domains of LMO2. Interacts via its N-terminal region with RUNX1. Expressed in all fetal and adult tissues examined. Among fetal tissues, highest levels of expression detected in heart, lung, liver and kidney, and lower levels in brain. Among adult tissues, highest levels of expression detected in heart, placenta, lung, skeletal muscle, spleen, thymus, testis and ovary. Moderate expression in prostate, small intestine, kidney, liver and pancreas, and weak expression in colon, brain and peripheral blood lymphocytes.

The protein resides in the nucleus. Functionally, isoform 1 transcriptionally activates the LYN and BLK promoters and acts synergistically with RUNX1 to transactivate the BLK promoter. In terms of biological role, isoform 2 may function in repression of RUNX1-mediated transactivation. The polypeptide is ETS-related transcription factor Elf-2 (Homo sapiens (Human)).